We begin with the raw amino-acid sequence, 463 residues long: Calcitonin gene-related peptide type 1 receptor (463 aa).

Positions 1–22 (MDKKHILCFLVLLPLNMALISA) are cleaved as a signal peptide. Residues 23 to 138 (ESEEGVNQTD…STHEKVKTAL (116 aa)) lie on the Extracellular side of the membrane. Asn-29, Asn-65, Asn-117, Asn-122, Asn-127, and Asn-128 each carry an N-linked (GlcNAc...) asparagine glycan. Cystine bridges form between Cys-47/Cys-73, Cys-64/Cys-104, and Cys-87/Cys-126. Residues 139 to 163 (NLFYLTIIGHGLSIASLIISLIIFF) form a helical membrane-spanning segment. The Cytoplasmic segment spans residues 164-174 (YFKSLSCQRIT). Residues 175 to 197 (LHKNLFFSFICNSIVTIIHLTAV) form a helical membrane-spanning segment. Residues 198 to 208 (ANNQALVATNP) are Extracellular-facing. A helical transmembrane segment spans residues 209–237 (VSCKVSQFIHLYLMGCNYFWMLCEGVYLH). Residues 238-251 (TLIVVAVFAEKQHL) lie on the Cytoplasmic side of the membrane. A helical membrane pass occupies residues 252–272 (MWYYFLGWGFPLLPACIHAIA). Residues 273-288 (RSLYYNDNCWISSDTH) lie on the Extracellular side of the membrane. Positions 287–288 (TH) are required for RAMP3 interaction. Residues 289-313 (LLYIIHGPICAALLVNLFFLLNIVR) form a helical membrane-spanning segment. Topologically, residues 314 to 328 (VLITKLKVTHQVESN) are cytoplasmic. The chain crosses the membrane as a helical span at residues 329–350 (LYMKAVRATLILVPLLGIEFVL). Residues 351–365 (FPWRPEGKVAEEVYD) lie on the Extracellular side of the membrane. Residues 366-386 (YVMHILMHFQGLLVATIFCFF) traverse the membrane as a helical segment. At 387–463 (NGEVQAILRR…KSENMYDLVM (77 aa)) the chain is on the cytoplasmic side. Residues Ser-419 and Ser-444 each carry the phosphoserine modification.

Belongs to the G-protein coupled receptor 2 family. As to quaternary structure, heterodimer of CALCRL and RAMP1; the receptor complex functions as CGRP receptor. Heterodimer of CALCRL and RAMP2 or CALCRL and RAMP3; the complexes function as adrenomedullin receptor. As to expression, expressed predominantly in the lung, thymus, heart and brain.

It is found in the cell membrane. Functionally, g protein-coupled receptor which specificity is determined by its interaction with receptor-activity-modifying proteins (RAMPs). Together with RAMP1, form the receptor complex for calcitonin-gene-related peptides CALCA/CGRP1 and CALCB/CGRP2. Together with RAMP2 or RAMP3, function as receptor complexes for adrenomedullin (ADM and ADM2). Ligand binding causes a conformation change that triggers signaling via guanine nucleotide-binding proteins (G proteins) and modulates the activity of downstream effectors. Activates cAMP-dependent pathway. In Mus musculus (Mouse), this protein is Calcitonin gene-related peptide type 1 receptor.